The primary structure comprises 122 residues: EPIDERMAL PATTERNING FACTOR-like protein 1 (122 aa).

The first 26 residues, 1–26, serve as a signal peptide directing secretion; it reads MFAIYKSTLLLLPLILILLITPQVSS. 3 disulfide bridges follow: Cys-55–Cys-113, Cys-59–Cys-65, and Cys-62–Cys-115.

The protein belongs to the plant cysteine rich small secretory peptide family. Epidermal patterning factor subfamily.

It localises to the secreted. Its function is as follows. Controls stomatal patterning. The chain is EPIDERMAL PATTERNING FACTOR-like protein 1 from Arabidopsis thaliana (Mouse-ear cress).